The following is a 191-amino-acid chain: dTTP/UTP pyrophosphatase (191 aa).

The active-site Proton acceptor is the Asp69.

Belongs to the Maf family. YhdE subfamily. Requires a divalent metal cation as cofactor.

It is found in the cytoplasm. The enzyme catalyses dTTP + H2O = dTMP + diphosphate + H(+). It carries out the reaction UTP + H2O = UMP + diphosphate + H(+). Functionally, nucleoside triphosphate pyrophosphatase that hydrolyzes dTTP and UTP. May have a dual role in cell division arrest and in preventing the incorporation of modified nucleotides into cellular nucleic acids. The protein is dTTP/UTP pyrophosphatase of Pelotomaculum thermopropionicum (strain DSM 13744 / JCM 10971 / SI).